The primary structure comprises 549 residues: Eukaryotic translation initiation factor 4B2 (549 aa).

Disordered regions lie at residues 1–446 (MSKP…DLIR) and 465–549 (FRPR…REGW). Positions 24–46 (AEATATAADSQSFPSLKEAATAK) are enriched in low complexity. Gly residues-rich tracts occupy residues 96–109 (RLGGGFSSYGGGRS) and 126–136 (SWGGGGGGRRS). Positions 169 to 176 (GKKSLPSF) match the Nuclear localization signal 1 motif. Residues 184–218 (RYGGGGGSFGGGGGGGAGSYGGGGAGAGSGGGGGF) show a composition bias toward gly residues. The Nuclear localization signal 2 motif lies at 234 to 241 (SSTFGSGF). Residues 263–278 (QEERRRLVFEPRKADT) show a composition bias toward basic and acidic residues. Polar residues predominate over residues 281 to 292 (SETPTAVKTSKP). A compositionally biased stretch (basic and acidic residues) spans 299–323 (RPREQVLAEKGLDWKKLDSDIEAKK). Over residues 327 to 349 (SRPSSAQSSRPSSAQSNRSESSA) the composition is skewed to low complexity. 3 stretches are compositionally biased toward basic and acidic residues: residues 369-431 (AKPR…KESQ), 485-507 (ERPHSRAGSIDESRSVESMERPR), and 518-549 (PVDDRRNFQGSKERGFFNNRNFDRSSSAREGW).

The protein belongs to the eIF-4 subunit B family. Homodimer. Nonspherical monomer. mRNA-discriminating component of initiation complexes. Phosphorylated.

The protein localises to the nucleus. In terms of biological role, promotes the eIF4F and eIF4A RNA-dependent ATP-hydrolysis activity with different efficiency depending on mRNAs, thus providing mRNA discrimination during initiation of translation. The protein is Eukaryotic translation initiation factor 4B2 of Arabidopsis thaliana (Mouse-ear cress).